Consider the following 79-residue polypeptide: Protein AC4 (79 aa).

Polar residues-rich tracts occupy residues 1 to 13 (MRLFSSKVNSSAQ) and 38 to 79 (QVPT…TQRH). The segment at 1–79 (MRLFSSKVNS…SLPTTHTQRH (79 aa)) is disordered.

The protein belongs to the geminiviridae protein AC4/C4 family.

Functionally, pathogenicity determinant. May act as a suppressor of RNA-mediated gene silencing, also known as post-transcriptional gene silencing (PTGS), a mechanism of plant viral defense that limits the accumulation of viral RNAs. The chain is Protein AC4 from Bean golden yellow mosaic virus (isolate Puerto Rico-Japan) (BGYMV).